We begin with the raw amino-acid sequence, 261 residues long: Cytochrome c oxidase subunit 3 (261 aa).

Residues 1–15 are Mitochondrial matrix-facing; sequence MTHQTHAYHMVNPSP. A helical membrane pass occupies residues 16-34; it reads WPLTGALSALLMTSGLIMW. Residues 35–40 are Mitochondrial intermembrane-facing; it reads FHFNST. The helical transmembrane segment at 41–66 threads the bilayer; that stretch reads ALLMLGLTTNMLTMYQWWRDIVREST. At 67-72 the chain is on the mitochondrial matrix side; the sequence is FQGHHT. A helical membrane pass occupies residues 73–105; it reads PTVQKGLRYGMILFIISEVLFFTGFFWAFYHSS. Residues 106–128 are Mitochondrial intermembrane-facing; sequence LAPTPELGGCWPPTGIHPLNPLE. A helical transmembrane segment spans residues 129-152; the sequence is VPLLNTSVLLASGVSITWAHHSLM. Topologically, residues 153–155 are mitochondrial matrix; the sequence is EGN. The helical transmembrane segment at 156–183 threads the bilayer; sequence RNHMLQALFITIALGVYFTLLQASEYYE. The Mitochondrial intermembrane segment spans residues 184–190; sequence APFTISD. The chain crosses the membrane as a helical span at residues 191 to 223; that stretch reads GVYGSTFFVATGFHGLHVIIGSTFLIVCFFRQL. Residues 224-232 are Mitochondrial matrix-facing; sequence KFHFTSNHH. Residues 233 to 256 traverse the membrane as a helical segment; sequence FGFEAAAWYWHFVDVVWLFLYVSI. The Mitochondrial intermembrane segment spans residues 257-261; sequence YWWGS.

The protein belongs to the cytochrome c oxidase subunit 3 family. In terms of assembly, component of the cytochrome c oxidase (complex IV, CIV), a multisubunit enzyme composed of 14 subunits. The complex is composed of a catalytic core of 3 subunits MT-CO1, MT-CO2 and MT-CO3, encoded in the mitochondrial DNA, and 11 supernumerary subunits COX4I, COX5A, COX5B, COX6A, COX6B, COX6C, COX7A, COX7B, COX7C, COX8 and NDUFA4, which are encoded in the nuclear genome. The complex exists as a monomer or a dimer and forms supercomplexes (SCs) in the inner mitochondrial membrane with NADH-ubiquinone oxidoreductase (complex I, CI) and ubiquinol-cytochrome c oxidoreductase (cytochrome b-c1 complex, complex III, CIII), resulting in different assemblies (supercomplex SCI(1)III(2)IV(1) and megacomplex MCI(2)III(2)IV(2)).

The protein resides in the mitochondrion inner membrane. It catalyses the reaction 4 Fe(II)-[cytochrome c] + O2 + 8 H(+)(in) = 4 Fe(III)-[cytochrome c] + 2 H2O + 4 H(+)(out). Component of the cytochrome c oxidase, the last enzyme in the mitochondrial electron transport chain which drives oxidative phosphorylation. The respiratory chain contains 3 multisubunit complexes succinate dehydrogenase (complex II, CII), ubiquinol-cytochrome c oxidoreductase (cytochrome b-c1 complex, complex III, CIII) and cytochrome c oxidase (complex IV, CIV), that cooperate to transfer electrons derived from NADH and succinate to molecular oxygen, creating an electrochemical gradient over the inner membrane that drives transmembrane transport and the ATP synthase. Cytochrome c oxidase is the component of the respiratory chain that catalyzes the reduction of oxygen to water. Electrons originating from reduced cytochrome c in the intermembrane space (IMS) are transferred via the dinuclear copper A center (CU(A)) of subunit 2 and heme A of subunit 1 to the active site in subunit 1, a binuclear center (BNC) formed by heme A3 and copper B (CU(B)). The BNC reduces molecular oxygen to 2 water molecules using 4 electrons from cytochrome c in the IMS and 4 protons from the mitochondrial matrix. This Cephalophorus natalensis (Natal red duiker) protein is Cytochrome c oxidase subunit 3 (MT-CO3).